The sequence spans 557 residues: Polypyrimidine tract-binding protein 1 (557 aa).

M1 bears the N-acetylmethionine mark. A Phosphoserine modification is found at S16. RRM domains follow at residues 59–143 (RVIH…SSPN), 184–260 (LRII…FSKL), and 363–437 (SVLL…LSKH). K65 participates in a covalent cross-link: Glycyl lysine isopeptide (Lys-Gly) (interchain with G-Cter in SUMO2). A Phosphotyrosine modification is found at Y127. T138 is subject to Phosphothreonine. S141 bears the Phosphoserine mark. K218 is covalently cross-linked (Glycyl lysine isopeptide (Lys-Gly) (interchain with G-Cter in SUMO2)). Position 459 is a phosphoserine (S459). In terms of domain architecture, RRM 4 spans 480 to 555 (ATLHLSNIPP…HHLRVSFSKS (76 aa)).

As to quaternary structure, monomer. Part of a ternary complex containing KHSRP, PTBP1, PTBP2 and HNRPH1. Interacts with RAVER1 and SFPQ. Interacts with IVNS1ABP (via BACK domain); the interaction is direct.

The protein resides in the nucleus. Its function is as follows. Plays a role in pre-mRNA splicing and in the regulation of alternative splicing events. Activates exon skipping of its own pre-mRNA during muscle cell differentiation. Binds to the polypyrimidine tract of introns. May promote RNA looping when bound to two separate polypyrimidine tracts in the same pre-mRNA. May promote the binding of U2 snRNP to pre-mRNA. Cooperates with RAVER1 to modulate switching between mutually exclusive exons during maturation of the TPM1 pre-mRNA. Represses the splicing of MAPT/Tau exon 10. Binds to polypyrimidine-rich controlling element (PCE) of CFTR and promotes exon skipping of CFTR exon 9, thereby antagonizing TIA1 and its role in exon inclusion of CFTR exon 9. Plays a role in the splicing of pyruvate kinase PKM by binding repressively to a polypyrimidine tract flanking PKM exon 9, inhibiting exon 9 inclusion and resulting in exon 10 inclusion and production of the PKM M2 isoform. In case of infection by picornaviruses, binds to the viral internal ribosome entry site (IRES) and stimulates the IRES-mediated translation. This Homo sapiens (Human) protein is Polypyrimidine tract-binding protein 1 (PTBP1).